A 313-amino-acid polypeptide reads, in one-letter code: Foldase protein PrsA (313 aa).

The N-terminal stretch at methionine 1–alanine 20 is a signal peptide. Residue cysteine 21 is the site of N-palmitoyl cysteine attachment. The S-diacylglycerol cysteine moiety is linked to residue cysteine 21. In terms of domain architecture, PpiC spans threonine 143–lysine 241.

This sequence belongs to the PrsA family.

It localises to the cell membrane. It carries out the reaction [protein]-peptidylproline (omega=180) = [protein]-peptidylproline (omega=0). In terms of biological role, plays a major role in protein secretion by helping the post-translocational extracellular folding of several secreted proteins. The protein is Foldase protein PrsA of Streptococcus pneumoniae serotype 4 (strain ATCC BAA-334 / TIGR4).